A 215-amino-acid polypeptide reads, in one-letter code: Pyridoxine/pyridoxamine 5'-phosphate oxidase (215 aa).

Residues 9 to 12 (RRDY) and Lys67 contribute to the substrate site. Residues 62–67 (RVVLLK), 77–78 (FT), Lys84, and Gln106 each bind FMN. 3 residues coordinate substrate: Tyr124, Arg128, and Ser132. FMN is bound by residues 141 to 142 (QS) and Trp186. 192-194 (RLH) contributes to the substrate binding site. Residue Arg196 coordinates FMN.

This sequence belongs to the pyridoxamine 5'-phosphate oxidase family. Homodimer. It depends on FMN as a cofactor.

It catalyses the reaction pyridoxamine 5'-phosphate + O2 + H2O = pyridoxal 5'-phosphate + H2O2 + NH4(+). It carries out the reaction pyridoxine 5'-phosphate + O2 = pyridoxal 5'-phosphate + H2O2. It functions in the pathway cofactor metabolism; pyridoxal 5'-phosphate salvage; pyridoxal 5'-phosphate from pyridoxamine 5'-phosphate: step 1/1. It participates in cofactor metabolism; pyridoxal 5'-phosphate salvage; pyridoxal 5'-phosphate from pyridoxine 5'-phosphate: step 1/1. Functionally, catalyzes the oxidation of either pyridoxine 5'-phosphate (PNP) or pyridoxamine 5'-phosphate (PMP) into pyridoxal 5'-phosphate (PLP). The sequence is that of Pyridoxine/pyridoxamine 5'-phosphate oxidase from Chromohalobacter salexigens (strain ATCC BAA-138 / DSM 3043 / CIP 106854 / NCIMB 13768 / 1H11).